The chain runs to 231 residues: Large ribosomal subunit protein uL1 (231 aa).

Belongs to the universal ribosomal protein uL1 family. As to quaternary structure, part of the 50S ribosomal subunit.

Functionally, binds directly to 23S rRNA. The L1 stalk is quite mobile in the ribosome, and is involved in E site tRNA release. Protein L1 is also a translational repressor protein, it controls the translation of the L11 operon by binding to its mRNA. The polypeptide is Large ribosomal subunit protein uL1 (Acinetobacter baumannii (strain AB0057)).